We begin with the raw amino-acid sequence, 451 residues long: MFLGEDYLLTNRAAVRLFNEVKDLPIVDPHNHLDAKDIVENKPWSDIWEVEGATDHYVWELMRRCGISEEYITGSRSNKEKWLALAKVFPRFVGNPTYEWIHLDLWRRFNIKKVISEETAEEIWEETKKKLPEMTPQKLLRDMKVEILCTTDDPVSTLEHHRKAKEVVEGVTILPTWRPDRAMNVDKEGWKEYVEKMGERYGEDTSTLEGFLSALWKSHEHFKEHGCVASDHALLEPSIYYVDENRARAIHEKAFSGEKLTQDEINDYKAFMMMQFGRMNQETNWVTQLHIGALRDYRDSLFKTLGPDSGGDISTNFLRIAEGLRYFLNEFDGKLKIVLYVLDPTHLPTVATIARAFPNVYVGAPWWFNDSPFGMEMHLKYLASVDLLYNLAGMVTDSRKLLSFGSRTEMFRRVLSSVVGEMVERGQIPIKEARELVKHVSYDGPKALFFG.

This sequence belongs to the metallo-dependent hydrolases superfamily. Uronate isomerase family.

It carries out the reaction D-glucuronate = D-fructuronate. The enzyme catalyses aldehydo-D-galacturonate = keto-D-tagaturonate. Its pathway is carbohydrate metabolism; pentose and glucuronate interconversion. The sequence is that of Uronate isomerase from Thermotoga petrophila (strain ATCC BAA-488 / DSM 13995 / JCM 10881 / RKU-1).